We begin with the raw amino-acid sequence, 282 residues long: D-alanine aminotransferase (282 aa).

Y32 serves as a coordination point for substrate. R51 contacts pyridoxal 5'-phosphate. 2 residues coordinate substrate: R99 and H101. The Proton acceptor role is filled by K146. K146 is subject to N6-(pyridoxal phosphate)lysine. Residue E178 coordinates pyridoxal 5'-phosphate.

It belongs to the class-IV pyridoxal-phosphate-dependent aminotransferase family. As to quaternary structure, homodimer. It depends on pyridoxal 5'-phosphate as a cofactor.

It catalyses the reaction D-alanine + 2-oxoglutarate = D-glutamate + pyruvate. In terms of biological role, acts on the D-isomers of alanine, leucine, aspartate, glutamate, aminobutyrate, norvaline and asparagine. The enzyme transfers an amino group from a substrate D-amino acid to the pyridoxal phosphate cofactor to form pyridoxamine and an alpha-keto acid in the first half-reaction. The second half-reaction is the reverse of the first, transferring the amino group from the pyridoxamine to a second alpha-keto acid to form the product D-amino acid via a ping-pong mechanism. This is an important process in the formation of D-alanine and D-glutamate, which are essential bacterial cell wall components. The sequence is that of D-alanine aminotransferase (dat) from Staphylococcus aureus (strain N315).